A 620-amino-acid chain; its full sequence is Arginine--tRNA ligase (620 aa).

Residues 147–157 (ANPTGPIHIGG) carry the 'HIGH' region motif.

This sequence belongs to the class-I aminoacyl-tRNA synthetase family. In terms of assembly, monomer.

The protein resides in the cytoplasm. It catalyses the reaction tRNA(Arg) + L-arginine + ATP = L-arginyl-tRNA(Arg) + AMP + diphosphate. This Bifidobacterium longum (strain DJO10A) protein is Arginine--tRNA ligase.